Reading from the N-terminus, the 347-residue chain is Nicotinate-nucleotide--dimethylbenzimidazole phosphoribosyltransferase (347 aa).

Residue E316 is the Proton acceptor of the active site.

The protein belongs to the CobT family.

It carries out the reaction 5,6-dimethylbenzimidazole + nicotinate beta-D-ribonucleotide = alpha-ribazole 5'-phosphate + nicotinate + H(+). It participates in nucleoside biosynthesis; alpha-ribazole biosynthesis; alpha-ribazole from 5,6-dimethylbenzimidazole: step 1/2. Functionally, catalyzes the synthesis of alpha-ribazole-5'-phosphate from nicotinate mononucleotide (NAMN) and 5,6-dimethylbenzimidazole (DMB). The polypeptide is Nicotinate-nucleotide--dimethylbenzimidazole phosphoribosyltransferase (Vibrio parahaemolyticus serotype O3:K6 (strain RIMD 2210633)).